The primary structure comprises 298 residues: Protein DR_1172 (298 aa).

3 LEA-like repeats span residues 48–117, 128–197, and 201–270; these read DAAQ…NVGQ, DQAK…DVAQ, and QGAQ…AGKQ. Residues 174 to 193 show a composition bias toward basic and acidic residues; the sequence is VQDVKADASKAADQAKDKAQ. Residues 174–298 form a disordered region; that stretch reads VQDVKADASK…MTGNTNTRKN (125 aa). Positions 194–208 are enriched in low complexity; that stretch reads DVAQNVKQGAQQAAS. The span at 209–233 shows a compositional bias: basic and acidic residues; that stretch reads DAKDKVQDVKADASRAADQAKDKAQ. A compositionally biased stretch (low complexity) spans 275 to 298; sequence GSTTNNAGTAGNTGMTGNTNTRKN.

This sequence belongs to the LEA type 1 family.

In Deinococcus radiodurans (strain ATCC 13939 / DSM 20539 / JCM 16871 / CCUG 27074 / LMG 4051 / NBRC 15346 / NCIMB 9279 / VKM B-1422 / R1), this protein is Protein DR_1172.